Reading from the N-terminus, the 650-residue chain is Amyloid beta precursor like protein 1 (650 aa).

The first 38 residues, 1–38, serve as a signal peptide directing secretion; it reads MGPASPAARGLSRRPGQPPLPLLLPLLLLLLRAQPAIG. The Extracellular portion of the chain corresponds to 39–580; it reads SLAGGSPGAA…APAGTGVSRE (542 aa). Positions 50–146 are GFLD subdomain; that stretch reads APGSAQVAGL…PFRCLPGEFV (97 aa). One can recognise an E1 domain in the interval 50–212; that stretch reads APGSAQVAGL…RGVEYVCCPP (163 aa). 6 disulfides stabilise this stretch: cysteine 60–cysteine 84, cysteine 95–cysteine 140, cysteine 120–cysteine 128, cysteine 156–cysteine 210, cysteine 167–cysteine 197, and cysteine 181–cysteine 209. The segment at 154–212 is cuBD subdomain; that stretch reads EGCRFLHQERMDQCESSTRRHQEAQEACSSQGLILHGSGMLLPCGSDRFRGVEYVCCPP. Histidine 174 contributes to the Cu(2+) binding site. Zn(2+) is bound by residues glutamate 206, cysteine 209, and cysteine 210. A disordered region spans residues 214–287; sequence GTPDPSGTAV…LAVVGKVTPT (74 aa). An O-linked (GalNAc...) threonine glycan is attached at threonine 215. Serine 227 is a glycosylation site (O-linked (GalNAc...) serine). Threonine 228 is a glycosylation site (O-linked (GalNAc...) threonine). An O-glycosylated at three sites region spans residues 285–305; sequence TPTPRPTDGVDIYFGMPGEIS. The region spanning 293-484 is the E2 domain; that stretch reads GVDIYFGMPG…QELRPQIQEL (192 aa). Heparin-binding regions lie at residues 310-342 and 410-441; these read FLRA…SKNL and LLAL…DPEK. Asparagine 337 is a glycosylation site (N-linked (GlcNAc...) asparagine). Residues 442 to 459 form a collagen-binding region; it reads AQQMRFQVHTHLQVIEER. Asparagine 461 carries N-linked (GlcNAc...) asparagine glycosylation. Residues 492 to 546 form a disordered region; the sequence is PSELEAPAPGGSSEDKGGLQPPDSKDDTPMTLPKGSTEQDAASPEKEKMNPLEQY. Basic and acidic residues-rich tracts occupy residues 504 to 519 and 534 to 546; these read SEDK…KDDT and SPEK…LEQY. Asparagine 551 carries an N-linked (GlcNAc...) asparagine glycan. Histidine 561 lines the Cu(2+) pocket. Histidine 561 contacts Zn(2+). A helical membrane pass occupies residues 581–603; the sequence is AVSGLLIMGAGGGSLIVLSMLLL. The Basolateral sorting signal signature appears at 604–615; it reads RRKKPYGAISHG. Over 604–650 the chain is Cytoplasmic; the sequence is RRKKPYGAISHGVVEVDPMLTLEEQQLRELQRHGYENPTYRFLEERP. The interval 632–649 is interaction with DAB1; that stretch reads ELQRHGYENPTYRFLEER. An interaction with DAB2 region spans residues 636 to 650; that stretch reads HGYENPTYRFLEERP. Positions 640 to 643 match the Clathrin-binding motif; that stretch reads NPTY. Positions 640-643 match the NPXY motif; contains endocytosis signal motif; the sequence is NPTY.

This sequence belongs to the APP family. Monomer and homodimer. Heparin binding promotes homodimerization. Binds, via its C-terminus, to the PID domain of several cytoplasmic proteins, including APBB and APBA family members, MAPK8IP1 and DAB1. Binding to Dab1 inhibits its serine phosphorylation. Interacts with CPEB1. Interacts (via NPXY motif) with DAB2 (via PID domain); the interaction is impaired by tyrosine phosphorylation of the NPXY motif. Interacts (via NPXY motif) with DAB1. Proteolytically cleaved by caspases during neuronal apoptosis. Cleaved, in vitro, at Asp-620 by caspase-3. Post-translationally, N- and O-glycosylated. O-glycosylation with core 1 or possibly core 8 glycans. Glycosylation on Ser-227 is the preferred site to Thr-228. Expressed in the cerebral cortex where it is localized to the postsynaptic density (PSD).

The protein resides in the cell membrane. Its subcellular location is the cytoplasm. In terms of biological role, may play a role in postsynaptic function. The C-terminal gamma-secretase processed fragment, ALID1, activates transcription activation through APBB1 (Fe65) binding. Couples to JIP signal transduction through C-terminal binding. May interact with cellular G-protein signaling pathways. Can regulate neurite outgrowth through binding to components of the extracellular matrix such as heparin and collagen I. The gamma-CTF peptide, C30, is a potent enhancer of neuronal apoptosis. This is Amyloid beta precursor like protein 1 (APLP1) from Homo sapiens (Human).